Reading from the N-terminus, the 306-residue chain is Mitochondrial glycine transporter (306 aa).

3 Solcar repeats span residues 25-114, 121-205, and 217-301; these read QPVI…LKQY, PTAL…TKNV, and LVPV…MMAK. Transmembrane regions (helical) follow at residues 31 to 56, 89 to 115, 127 to 152, 180 to 203, 221 to 247, and 276 to 294; these read FLCGSISGTCSTVLFQPLDLLKTRLQ, GMSPSIVRCVPGVGIYFGTLYSLKQYF, VILGAGSRSVAGVCMSPITVIKTRYE, GLTATLLRDAPFSGIYLMFYSQTK, VNFSCGIFAGILASLVTQPADVIKTHM, and GSVPRALRRTLVAAMAWTV.

This sequence belongs to the mitochondrial carrier (TC 2.A.29) family. SLC25A38 subfamily.

It is found in the mitochondrion inner membrane. The catalysed reaction is glycine(in) = glycine(out). Functionally, mitochondrial glycine transporter that imports glycine into the mitochondrial matrix. Plays an important role in providing glycine for the first enzymatic step in heme biosynthesis, the condensation of glycine with succinyl-CoA to produce 5-aminolevulinate (ALA) in the mitochondrial matrix. Required during erythropoiesis. Its function is as follows. Plays a role as pro-apoptotic protein that induces caspase-dependent apoptosis. The chain is Mitochondrial glycine transporter from Ovis aries (Sheep).